The sequence spans 514 residues: Peptide chain release factor 3 (514 aa).

The region spanning 8-268 (KKRRTFAIIS…TFLEFAPEPH (261 aa)) is the tr-type G domain. Residues 17-24 (SHPDAGKT), 85-89 (DTPGH), and 139-142 (NKLD) each bind GTP.

It belongs to the TRAFAC class translation factor GTPase superfamily. Classic translation factor GTPase family. PrfC subfamily.

The protein localises to the cytoplasm. In terms of biological role, increases the formation of ribosomal termination complexes and stimulates activities of RF-1 and RF-2. It binds guanine nucleotides and has strong preference for UGA stop codons. It may interact directly with the ribosome. The stimulation of RF-1 and RF-2 is significantly reduced by GTP and GDP, but not by GMP. The polypeptide is Peptide chain release factor 3 (Streptococcus pyogenes serotype M2 (strain MGAS10270)).